A 703-amino-acid chain; its full sequence is Neoverrucotoxin subunit alpha (703 aa).

An N-acetylserine modification is found at serine 2. The B30.2/SPRY domain occupies 508-703 (PRMPFVQGYK…RFDHGTVRLL (196 aa)).

It belongs to the SNTX/VTX toxin family. As to quaternary structure, heterodimer of alpha and beta subunits. Not glycosylated. In terms of processing, four intrachain disulfide linkages are present in the heterodimer. No interchain disulfide bound links the two subunits. Expressed by the venom gland.

Its subcellular location is the secreted. Has hemolytic and lethal activities. Its hemolytic activity is inhibited by anionic lipids, especially potently by cardiolipin. This chain is Neoverrucotoxin subunit alpha, found in Synanceia verrucosa (Reef stonefish).